Here is a 347-residue protein sequence, read N- to C-terminus: Quinolinate synthase (347 aa).

Iminosuccinate is bound by residues H47 and S68. A [4Fe-4S] cluster-binding site is contributed by C113. Iminosuccinate is bound by residues 139–141 (YAN) and S156. Residue C200 coordinates [4Fe-4S] cluster. Residues 226–228 (HPE) and T243 contribute to the iminosuccinate site. Residue C297 coordinates [4Fe-4S] cluster.

This sequence belongs to the quinolinate synthase family. Type 1 subfamily. [4Fe-4S] cluster serves as cofactor.

Its subcellular location is the cytoplasm. The enzyme catalyses iminosuccinate + dihydroxyacetone phosphate = quinolinate + phosphate + 2 H2O + H(+). Its pathway is cofactor biosynthesis; NAD(+) biosynthesis; quinolinate from iminoaspartate: step 1/1. Its function is as follows. Catalyzes the condensation of iminoaspartate with dihydroxyacetone phosphate to form quinolinate. The sequence is that of Quinolinate synthase from Escherichia coli O127:H6 (strain E2348/69 / EPEC).